Reading from the N-terminus, the 398-residue chain is Acetyl-CoA acetyltransferase (398 aa).

N-acetylserine is present on Ser-2. The active-site Acyl-thioester intermediate is the Cys-91. Tyr-186 and Lys-231 together coordinate CoA. Residue Tyr-186 coordinates K(+). Residues Ala-248, Ala-249, and Ala-251 each contribute to the K(+) site. Ser-252 provides a ligand contact to CoA. Residue Val-350 participates in K(+) binding. Residues His-354 and Cys-384 each act as proton acceptor in the active site.

Belongs to the thiolase-like superfamily. Thiolase family. Homotetramer.

It localises to the cytoplasm. It catalyses the reaction 2 acetyl-CoA = acetoacetyl-CoA + CoA. Its pathway is metabolic intermediate biosynthesis; (R)-mevalonate biosynthesis; (R)-mevalonate from acetyl-CoA: step 1/3. Functionally, acetyl-CoA acetyltransferase; part of the first module of ergosterol biosynthesis pathway that includes the early steps of the pathway, conserved across all eukaryotes, and which results in the formation of mevalonate from acetyl-coenzyme A (acetyl-CoA). In this module, the acetyl-CoA acetyltransferase ERG10 catalyzes the formation of acetoacetyl-CoA. The hydroxymethylglutaryl-CoA synthase ERG13 then condenses acetyl-CoA with acetoacetyl-CoA to form HMG-CoA. The rate-limiting step of the early module is the reduction to mevalonate by the 3-hydroxy-3-methylglutaryl-coenzyme A (HMG-CoA) reductases HMG1 and HMG2 which are derived from a single ancestral HMGR gene by gene duplication. This is Acetyl-CoA acetyltransferase from Saccharomyces pastorianus (strain ATCC 76670 / Carlsberg bottom yeast no.2 / CBS 1503 / CLIB 180 / NBRC 10610 / NRRL Y-1525) (Saaz-type lager yeast).